The following is a 296-amino-acid chain: 4-hydroxy-tetrahydrodipicolinate synthase (296 aa).

Threonine 49 provides a ligand contact to pyruvate. Catalysis depends on tyrosine 137, which acts as the Proton donor/acceptor. The Schiff-base intermediate with substrate role is filled by lysine 166. Isoleucine 208 lines the pyruvate pocket.

This sequence belongs to the DapA family. Homotetramer; dimer of dimers.

Its subcellular location is the cytoplasm. The enzyme catalyses L-aspartate 4-semialdehyde + pyruvate = (2S,4S)-4-hydroxy-2,3,4,5-tetrahydrodipicolinate + H2O + H(+). It functions in the pathway amino-acid biosynthesis; L-lysine biosynthesis via DAP pathway; (S)-tetrahydrodipicolinate from L-aspartate: step 3/4. Functionally, catalyzes the condensation of (S)-aspartate-beta-semialdehyde [(S)-ASA] and pyruvate to 4-hydroxy-tetrahydrodipicolinate (HTPA). The chain is 4-hydroxy-tetrahydrodipicolinate synthase from Chlorobium luteolum (strain DSM 273 / BCRC 81028 / 2530) (Pelodictyon luteolum).